Consider the following 205-residue polypeptide: Phosphoserine phosphatase ThrH (205 aa).

Asp-7 acts as the Nucleophile in catalysis. Residues Asp-7 and Glu-9 each contribute to the Mg(2+) site. Glu-9 acts as the Proton donor in catalysis. Substrate-binding positions include Glu-15, Arg-46, 90–91 (SD), and Lys-133. Asp-152 serves as a coordination point for Mg(2+). Position 155 (Asn-155) interacts with substrate.

It belongs to the thrH family. Mg(2+) is required as a cofactor.

It catalyses the reaction O-phospho-L-serine + H2O = L-serine + phosphate. The enzyme catalyses O-phospho-D-serine + H2O = D-serine + phosphate. Its pathway is amino-acid biosynthesis; L-serine biosynthesis; L-serine from 3-phospho-D-glycerate: step 3/3. Phosphoserine phosphatase that mediates dephosphorylation of phosphoserine in the serine biosynthesis pathway. Also able to dephosphorylate other substrates such as phospho-L(or D)-threonine, with lower activity. Shows phosphoserine:homoserine phosphotransferase activity by transferring the phosphoryl group to homoserine using phosphoserine as the phosphoryl group donor. In Pseudomonas aeruginosa (strain ATCC 15692 / DSM 22644 / CIP 104116 / JCM 14847 / LMG 12228 / 1C / PRS 101 / PAO1), this protein is Phosphoserine phosphatase ThrH (thrH).